The sequence spans 480 residues: Adenosylhomocysteinase (480 aa).

Substrate-binding residues include Thr63, Asp142, and Glu203. 204–206 (TTT) lines the NAD(+) pocket. Substrate-binding residues include Lys233 and Asp237. NAD(+) contacts are provided by residues Asn238, 267-272 (GYGDVG), Glu290, Asn325, 346-348 (IGH), and Asn394.

The protein belongs to the adenosylhomocysteinase family. NAD(+) is required as a cofactor.

Its subcellular location is the cytoplasm. It catalyses the reaction S-adenosyl-L-homocysteine + H2O = L-homocysteine + adenosine. It functions in the pathway amino-acid biosynthesis; L-homocysteine biosynthesis; L-homocysteine from S-adenosyl-L-homocysteine: step 1/1. In terms of biological role, may play a key role in the regulation of the intracellular concentration of adenosylhomocysteine. The chain is Adenosylhomocysteinase from Xylella fastidiosa (strain Temecula1 / ATCC 700964).